The chain runs to 691 residues: MKEIQAIYVDLKKLRNIGIMAHIDAGKTTTTERILFYTGRKHNIGSVDDGTATMDWMVQEKERGITIVSAATTCMWKDHRINIIDTPGHVDFTIEVERALRVLDGAIAVFDAAAGVEPQSETVWRQADKYNVPRIAFMNKMDKIGADFDMAVKSMEKKLKANPIPVQMPMGAEDSFEGVIDLIEMKAIRWLDVEGTEMVYEEIPEKYLAKAEEMREDLLEKLAELDDEIMEMYLEGEEISNELIKKALREATLENKATPVFCGSAKMNRGVQPLLDGVLEYLPSPLDMPPVKGWNSDGEEIEVLPDENEPFTALAFKIQADPYVGKLTFFRVYSGRLEKGSYVYNSTKGKKERISRLIFMHADKREDVEYVRAGDIVAAIGLKDTKTGDTLCDEKRPVILEKMEFPEPVISIAIEPETKKDQDKLSKALTLLSDEDPSFRAYVDNETGETIISGMGELHLEIIVDRLKREFNTNVRVGQPQVAYRETIQVPAEAEGKYIRQSGGRGQYGHVVMRFEPIDLSKTFEFEDRIVGGVIPKEYIPAVEEGVREAAQSGYLSGYPMVGIKAILLDGSYHEVDSSEMAFKIAASMAFKEAVKKAQPVLLEPVMSVEITTPEEYMGNIIADLNSRRAHVESLDSRGHLRIIKALVPLSEMFGYATDLRSQSQGRATYTMVLAKYAKVPDKIAERIISK.

A tr-type G domain is found at 12–286 (KKLRNIGIMA…GVLEYLPSPL (275 aa)). Residues 21-28 (AHIDAGKT), 85-89 (DTPGH), and 139-142 (NKMD) contribute to the GTP site.

Belongs to the TRAFAC class translation factor GTPase superfamily. Classic translation factor GTPase family. EF-G/EF-2 subfamily.

It localises to the cytoplasm. Its function is as follows. Catalyzes the GTP-dependent ribosomal translocation step during translation elongation. During this step, the ribosome changes from the pre-translocational (PRE) to the post-translocational (POST) state as the newly formed A-site-bound peptidyl-tRNA and P-site-bound deacylated tRNA move to the P and E sites, respectively. Catalyzes the coordinated movement of the two tRNA molecules, the mRNA and conformational changes in the ribosome. This is Elongation factor G from Thermosipho melanesiensis (strain DSM 12029 / CIP 104789 / BI429).